We begin with the raw amino-acid sequence, 304 residues long: Non-structural maintenance of chromosomes element 3 homolog (304 aa).

Disordered regions lie at residues 1 to 82 and 285 to 304; these read MLQK…PRSQ and ALADEENRARPQPSGPAPSS. Residues 32–43 show a composition bias toward basic and acidic residues; it reads AGEDARVLRDGF. Ser-57, Ser-60, and Ser-64 each carry phosphoserine. The span at 60-80 shows a compositional bias: low complexity; the sequence is SQGPSPQGARRAQAAPAVGPR. The segment at 78-304 is interaction with NSMCE1; sequence GPRSQKQLEL…PQPSGPAPSS (227 aa). Residues 85–285 form the MAGE domain; it reads LELKVSELVQ…KDWPAQYCEA (201 aa).

As to quaternary structure, component of the SMC5-SMC6 complex which consists at least of SMC5, SMC6, NSMCE2, NSMCE1, NSMCE4A or EID3 and NSMCE3. NSMCE1, NSMCE4A or EID3 and NSMCE3 probably form a subcomplex that bridges the head domains of the SMC5:SMC6 heterodimer. Interacts with PJA1. Interacts with E2F1 (via C-terminus). Interacts with NGFR (via C-terminus). Interacts with NSMCE1. Interacts with NSMCE4. Interacts with SMC6. Interacts with EID3. As to expression, ubiquitous.

The protein localises to the cytoplasm. The protein resides in the nucleus. It is found in the chromosome. Its subcellular location is the telomere. Component of the SMC5-SMC6 complex, a complex involved in repair of DNA double-strand breaks by homologous recombination. The complex may promote sister chromatid homologous recombination by recruiting the SMC1-SMC3 cohesin complex to double-strand breaks. The complex is required for telomere maintenance via recombination in ALT (alternative lengthening of telomeres) cell lines and mediates sumoylation of shelterin complex (telosome) components which is proposed to lead to shelterin complex disassembly in ALT-associated PML bodies (APBs). In vitro enhances ubiquitin ligase activity of NSMCE1. Proposed to act through recruitment and/or stabilization of the Ubl-conjugating enzyme (E2) at the E3:substrate complex. May be a growth suppressor that facilitates the entry of the cell into cell cycle arrest. The protein is Non-structural maintenance of chromosomes element 3 homolog of Homo sapiens (Human).